Reading from the N-terminus, the 323-residue chain is Methionine adenosyltransferase 2 subunit beta (323 aa).

Residues 26–29, 49–51, 60–61, C82, R86, Y146, and L172 each bind NADP(+); these read TGLL, YNR, and NL. The interval 308–323 is required for interaction with MAT2A; the sequence is LWPFQHDKRWRQTVFH.

The protein belongs to the dTDP-4-dehydrorhamnose reductase family. MAT2B subfamily. In terms of assembly, heterotrimer; composed of a catalytic mat2a homodimer that binds one regulatory mat2b chain. Heterohexamer; composed of a central, catalytic mat2a homotetramer flanked on either side by a regulatory mat2b chain. NADP binding increases the affinity for mat2a.

Its pathway is amino-acid biosynthesis; S-adenosyl-L-methionine biosynthesis; S-adenosyl-L-methionine from L-methionine: step 1/1. Its function is as follows. Regulatory subunit of S-adenosylmethionine synthetase 2, an enzyme that catalyzes the formation of S-adenosylmethionine from methionine and ATP. Regulates MAT2A catalytic activity by changing its kinetic properties, increasing its affinity for L-methionine. Can bind NADP (in vitro). In Danio rerio (Zebrafish), this protein is Methionine adenosyltransferase 2 subunit beta (mat2b).